The following is a 158-amino-acid chain: UPF0266 membrane protein YobD (158 aa).

Transmembrane regions (helical) follow at residues L6–M26, I45–H65, and A67–I87.

The protein belongs to the UPF0266 family.

The protein resides in the cell inner membrane. The protein is UPF0266 membrane protein YobD of Shigella boydii serotype 4 (strain Sb227).